Reading from the N-terminus, the 571-residue chain is Leiomodin-3 (571 aa).

3 disordered regions span residues 1-29 (MSGH…NLSP), 46-67 (PHLP…GNFN), and 91-228 (PVSF…AKLD). Residues 10–23 (QEDTLSEELDEDEL) are compositionally biased toward acidic residues. A compositionally biased stretch (polar residues) spans 94 to 105 (FVQSEKNTQNQR). Over residues 119–134 (LKEKLNSEILAKKRES) the composition is skewed to basic and acidic residues. Residues 142-179 (EAEDDDEDEEEEEEDDEDEEEEEEDEEDDEGEEDEDGE) show a composition bias toward acidic residues. The span at 180 to 192 (QANREKNDAKEQI) shows a compositional bias: basic and acidic residues. The segment covering 193 to 204 (HNNPGTYQQLAT) has biased composition (polar residues). Positions 206 to 228 (TAHEQKDTSETKEKGEKKIAKLD) are enriched in basic and acidic residues. Positions 397–436 (VTNLLTRNQDKRRQKRQEEQQQQQLKEQRKLIAMLENGLG) form a coiled coil. The WH2 domain maps to 545 to 564 (PRDQLLNDIRHSNVAYLKPV).

The protein belongs to the tropomodulin family. May interact with tropomyosin alpha (TPM1/2) N-terminus. Interacts with KLHL40; leading to stabilization. In terms of processing, ubiquitinated, leading to its degradation. Interaction with KLHL40 negatively regulates ubiquitination and degradation. In terms of tissue distribution, skeletal muscle and heart-specific (at protein level).

The protein resides in the cytoplasm. The protein localises to the myofibril. Its subcellular location is the sarcomere. It is found in the a band. It localises to the m line. The protein resides in the cytoskeleton. Functionally, essential for the organization of sarcomeric actin thin filaments in skeletal muscle. Increases the rate of actin polymerization. The sequence is that of Leiomodin-3 from Mus musculus (Mouse).